Reading from the N-terminus, the 268-residue chain is Tetraspanin-5 (268 aa).

The Cytoplasmic segment spans residues 1 to 17 (MSGKHYKGPEVSCCIKY). Residues 18–38 (FIFGFNVIFWFLGITFLGIGL) form a helical membrane-spanning segment. At 39–61 (WAWNEKGVLSNISSITDLGGFDP) the chain is on the extracellular side. N49 carries an N-linked (GlcNAc...) asparagine glycan. A helical transmembrane segment spans residues 62–82 (VWLFLVVGGVMFILGFAGCIG). Topologically, residues 83–92 (ALRENTFLLK) are cytoplasmic. The chain crosses the membrane as a helical span at residues 93–113 (FFSVFLGIIFFLELTAGVLAF). The Extracellular segment spans residues 114–232 (VFKDWIKDQL…PQFEKWLQDN (119 aa)). Cystine bridges form between C153/C221, C154/C186, C170/C180, and C187/C200. N-linked (GlcNAc...) asparagine glycans are attached at residues N169 and N174. N232 carries N-linked (GlcNAc...) asparagine glycosylation. A helical membrane pass occupies residues 233–253 (LTIVAGIFIGIALLQIFGICL). Over 254–268 (AQNLVSDIEAVRASW) the chain is Cytoplasmic.

It belongs to the tetraspanin (TM4SF) family. Interacts with ADAM10; the interaction influences ADAM10 substrate specificity, endocytosis and turnover. Palmitoylated.

The protein localises to the cell membrane. Its function is as follows. Part of TspanC8 subgroup, composed of 6 members that interact with the transmembrane metalloprotease ADAM10. This interaction is required for ADAM10 exit from the endoplasmic reticulum and for enzymatic maturation and trafficking to the cell surface as well as substrate specificity. Different TspanC8/ADAM10 complexes have distinct substrates. Promotes ADAM10-mediated cleavage of CD44. Seems to regulate VE-cadherin expression in endothelial cells probably through interaction with ADAM10, promoting leukocyte transmigration. This chain is Tetraspanin-5, found in Homo sapiens (Human).